The chain runs to 461 residues: Fumarate hydratase class II (461 aa).

Substrate is bound by residues 99 to 101 (SGT), arginine 127, 130 to 133 (HPND), 140 to 142 (SSN), and threonine 188. Catalysis depends on histidine 189, which acts as the Proton donor/acceptor. Residue serine 319 is part of the active site. Substrate-binding positions include serine 320 and 325 to 327 (KVN).

It belongs to the class-II fumarase/aspartase family. Fumarase subfamily. Homotetramer.

It is found in the cytoplasm. It catalyses the reaction (S)-malate = fumarate + H2O. It participates in carbohydrate metabolism; tricarboxylic acid cycle; (S)-malate from fumarate: step 1/1. Involved in the TCA cycle. Catalyzes the stereospecific interconversion of fumarate to L-malate. The polypeptide is Fumarate hydratase class II (Chromobacterium violaceum (strain ATCC 12472 / DSM 30191 / JCM 1249 / CCUG 213 / NBRC 12614 / NCIMB 9131 / NCTC 9757 / MK)).